A 63-amino-acid polypeptide reads, in one-letter code: Adipokinetic prohormone type 1 (63 aa).

A signal peptide spans 1 to 22 (MVQRCALVVLLVVAVAAALCSA). The residue at position 23 (Gln23) is a Pyrrolidone carboxylic acid. Thr32 bears the Threonine amide mark.

Belongs to the AKH/HRTH/RPCH family.

It localises to the secreted. In terms of biological role, this hormone, released from cells in the corpora cardiaca, causes release of diglycerides from the fat body and stimulation of muscles to use these diglycerides as an energy source during energy-demanding processes. In Locusta migratoria (Migratory locust), this protein is Adipokinetic prohormone type 1.